The chain runs to 630 residues: 1-deoxy-D-xylulose-5-phosphate synthase (630 aa).

Thiamine diphosphate contacts are provided by residues His72 and 113-115 (GHS). Asp144 is a Mg(2+) binding site. Thiamine diphosphate contacts are provided by residues 145 to 146 (GA), Asn173, Tyr284, and Glu367. Residue Asn173 coordinates Mg(2+).

This sequence belongs to the transketolase family. DXPS subfamily. As to quaternary structure, homodimer. It depends on Mg(2+) as a cofactor. Thiamine diphosphate is required as a cofactor.

The catalysed reaction is D-glyceraldehyde 3-phosphate + pyruvate + H(+) = 1-deoxy-D-xylulose 5-phosphate + CO2. It participates in metabolic intermediate biosynthesis; 1-deoxy-D-xylulose 5-phosphate biosynthesis; 1-deoxy-D-xylulose 5-phosphate from D-glyceraldehyde 3-phosphate and pyruvate: step 1/1. Catalyzes the acyloin condensation reaction between C atoms 2 and 3 of pyruvate and glyceraldehyde 3-phosphate to yield 1-deoxy-D-xylulose-5-phosphate (DXP). The chain is 1-deoxy-D-xylulose-5-phosphate synthase from Bacillus cereus (strain AH187).